The chain runs to 558 residues: Asparagine--tRNA ligase, cytoplasmic (558 aa).

Ser-71 carries the phosphoserine modification. The disordered stretch occupies residues 79–101; sequence MWHREQMKSESREKKEAEDSLRR. Residues 81–101 show a composition bias toward basic and acidic residues; sequence HREQMKSESREKKEAEDSLRR. N6-acetyllysine occurs at positions 254 and 500.

This sequence belongs to the class-II aminoacyl-tRNA synthetase family. As to quaternary structure, homodimer.

It is found in the cytoplasm. The enzyme catalyses tRNA(Asn) + L-asparagine + ATP = L-asparaginyl-tRNA(Asn) + AMP + diphosphate + H(+). Its function is as follows. Catalyzes the attachment of asparagine to tRNA(Asn) in a two-step reaction: asparagine is first activated by ATP to form Asn-AMP and then transferred to the acceptor end of tRNA(Asn). In addition to its essential role in protein synthesis, acts as a signaling molecule that induced migration of CCR3-expressing cells. Has an essential role in the development of the cerebral cortex, being required for proper proliferation of radial glial cells. The sequence is that of Asparagine--tRNA ligase, cytoplasmic from Macaca fascicularis (Crab-eating macaque).